A 316-amino-acid polypeptide reads, in one-letter code: MKSISYLNTKEKNKKKLSIPSKTIFAKENEYGLKKPNWLKIKLPLNNKKINKIKLIMRKNNLHTVCEEAACPNLAECFNRGTATFMILGSICTRRCPFCNVSSGRPSLVDTKEPENLSKAAIKMKLKHIVITSVDRDDLKDGGSEHFSNCIRFIRKKNPDIKIEILVPDFRGCTELALNNISTYPPDIFNHNLESIPRLYSKVRPGANYKRSLELLEKFNLINPNIPTKSGLMLGLGETKEEIIEVMKDLRKSYVSMITIGQYLRPTKNHLTVNRYVHPKEFRELNLIAFDLGFKHAMCGPLVRSSYHAENQINCY.

The [4Fe-4S] cluster site is built by C66, C71, C77, C92, C96, C99, and S306. The region spanning 78-295 (FNRGTATFMI…NLIAFDLGFK (218 aa)) is the Radical SAM core domain.

This sequence belongs to the radical SAM superfamily. Lipoyl synthase family. Requires [4Fe-4S] cluster as cofactor.

Its subcellular location is the cytoplasm. The enzyme catalyses [[Fe-S] cluster scaffold protein carrying a second [4Fe-4S](2+) cluster] + N(6)-octanoyl-L-lysyl-[protein] + 2 oxidized [2Fe-2S]-[ferredoxin] + 2 S-adenosyl-L-methionine + 4 H(+) = [[Fe-S] cluster scaffold protein] + N(6)-[(R)-dihydrolipoyl]-L-lysyl-[protein] + 4 Fe(3+) + 2 hydrogen sulfide + 2 5'-deoxyadenosine + 2 L-methionine + 2 reduced [2Fe-2S]-[ferredoxin]. It participates in protein modification; protein lipoylation via endogenous pathway; protein N(6)-(lipoyl)lysine from octanoyl-[acyl-carrier-protein]: step 2/2. Catalyzes the radical-mediated insertion of two sulfur atoms into the C-6 and C-8 positions of the octanoyl moiety bound to the lipoyl domains of lipoate-dependent enzymes, thereby converting the octanoylated domains into lipoylated derivatives. The sequence is that of Lipoyl synthase from Wigglesworthia glossinidia brevipalpis.